The following is a 561-amino-acid chain: Carboxylesterase patB (561 aa).

An N-terminal signal peptide occupies residues 1–19 (MQIINWASLLLVTWETVVA). Asparagine 38, asparagine 69, and asparagine 109 each carry an N-linked (GlcNAc...) asparagine glycan. The Acyl-ester intermediate role is filled by serine 263. Serine 263 contributes to the substrate binding site. Residue asparagine 316 is glycosylated (N-linked (GlcNAc...) asparagine). The active-site Charge relay system is glutamate 385. Asparagine 393, asparagine 412, asparagine 429, and asparagine 496 each carry an N-linked (GlcNAc...) asparagine glycan.

This sequence belongs to the type-B carboxylesterase/lipase family.

Its subcellular location is the cytoplasm. The protein resides in the cytosol. It carries out the reaction a carboxylic ester + H2O = an alcohol + a carboxylate + H(+). It participates in mycotoxin biosynthesis; patulin biosynthesis. Its function is as follows. Carboxylesterase; part of the gene cluster that mediates the biosynthesis of patulin, an acetate-derived tetraketide mycotoxin produced by several fungal species that shows antimicrobial properties against several bacteria. The function of patB in patulin synthesis has still to be characterized. The pathway begins with the synthesis of 6-methylsalicylic acid by the polyketide synthase (PKS) patK via condensation of acetate and malonate units. The 6-methylsalicylic acid decarboxylase patG then catalyzes the decarboxylation of 6-methylsalicylic acid to yield m-cresol (also known as 3-methylphenol). These first reactions occur in the cytosol. The intermediate m-cresol is then transported into the endoplasmic reticulum where the cytochrome P450 monooxygenase patH converts it to m-hydroxybenzyl alcohol, which is further converted to gentisyl alcohol by the cytochrome P450 monooxygenase patI. The oxidoreductases patJ and patO further convert gentisyl alcohol to isoepoxydon in the vacuole. PatN catalyzes then the transformation of isoepoxydon into phyllostine. The cluster protein patF is responsible for the conversion from phyllostine to neopatulin whereas the alcohol dehydrogenase patD converts neopatulin to E-ascladiol. The steps between isoepoxydon and E-ascladiol occur in the cytosol, and E-ascladiol is probably secreted to the extracellular space by one of the cluster-specific transporters patC or patM. Finally, the secreted patulin synthase patE catalyzes the conversion of E-ascladiol to patulin. The chain is Carboxylesterase patB from Penicillium expansum (Blue mold rot fungus).